A 459-amino-acid polypeptide reads, in one-letter code: DIMBOA UDP-glucosyltransferase BX8 (459 aa).

Histidine 19 (proton acceptor) is an active-site residue. Residue histidine 19 coordinates an anthocyanidin. Aspartate 119 (charge relay) is an active-site residue. Threonine 141, alanine 340, glutamine 342, histidine 357, tryptophan 360, asparagine 361, serine 362, and glutamate 365 together coordinate UDP-alpha-D-glucose. An an anthocyanidin-binding site is contributed by glycine 380. The UDP-alpha-D-glucose site is built by aspartate 381 and glutamine 382.

The protein belongs to the UDP-glycosyltransferase family. Requires Mg(2+) as cofactor. It depends on Ca(2+) as a cofactor. As to expression, expressed at the same levels in roots and shoots.

It carries out the reaction DIMBOA + UDP-alpha-D-glucose = DIMBOA beta-D-glucoside + UDP + H(+). The enzyme catalyses DIBOA + UDP-alpha-D-glucose = DIBOA beta-D-glucoside + UDP + H(+). Functionally, glucosyltransferase involved in the last step of benzoxazinoid glucoside biosynthesis. Catalyzes the glucosylation of hydroxamic acids utilizing UDP-glucose as glucose doner, reducing the toxicity of these natural insecticides for storage. Can use DIMBOA and DIBOA as substrates, HMBOA (2-hydroxy-7-methoxy-2H-1,4-benzoxazin-3(4H)-one) and HBOA (2-hydroxy-2H-1,4-benzoxazin-3(4H)-one) with a lower efficiency, but not indole acetic acid or quercitin. The protein is DIMBOA UDP-glucosyltransferase BX8 (Bx8) of Zea mays (Maize).